The following is a 274-amino-acid chain: Hydroxyacylglutathione hydrolase, cytoplasmic isozyme (274 aa).

The Zn(2+) site is built by histidine 59, histidine 61, aspartate 63, histidine 64, histidine 121, and aspartate 144. Residues arginine 153 and 188–190 each bind substrate; that span reads HEY. Position 188 (histidine 188) interacts with Zn(2+). A Phosphoserine modification is found at serine 257. 268–271 is a substrate binding site; it reads RAMK.

The protein belongs to the metallo-beta-lactamase superfamily. Glyoxalase II family. It depends on Zn(2+) as a cofactor.

Its subcellular location is the cytoplasm. The enzyme catalyses an S-(2-hydroxyacyl)glutathione + H2O = a 2-hydroxy carboxylate + glutathione + H(+). It catalyses the reaction (R)-S-lactoylglutathione + H2O = (R)-lactate + glutathione + H(+). Its pathway is secondary metabolite metabolism; methylglyoxal degradation; (R)-lactate from methylglyoxal: step 2/2. Inhibited by various thiol compounds such as glutathione and coenzyme A. In terms of biological role, thiolesterase that catalyzes the hydrolysis of S-D-lactoylglutathione to form glutathione and D-lactic acid. Involved in the metabolism of methylglyoxal, a toxic compound for yeast proliferation, by converting methylglyoxal to lactate via S-D-lactoylglutathione by sequential enzyme reactions catalyzed by glyoxalase I and glyoxalase II. The polypeptide is Hydroxyacylglutathione hydrolase, cytoplasmic isozyme (Saccharomyces cerevisiae (strain ATCC 204508 / S288c) (Baker's yeast)).